We begin with the raw amino-acid sequence, 337 residues long: Inositol 2-dehydrogenase (337 aa).

It belongs to the Gfo/Idh/MocA family. In terms of assembly, homotetramer.

It carries out the reaction myo-inositol + NAD(+) = scyllo-inosose + NADH + H(+). Involved in the oxidation of myo-inositol (MI) to 2-keto-myo-inositol (2KMI or 2-inosose). In Burkholderia multivorans (strain ATCC 17616 / 249), this protein is Inositol 2-dehydrogenase.